Consider the following 240-residue polypeptide: Transcriptional regulatory protein BaeR (240 aa).

The 114-residue stretch at 12 to 125 (RILIVEDEPK…EVVARVKTIL (114 aa)) folds into the Response regulatory domain. Asp61 carries the post-translational modification 4-aspartylphosphate. Positions 131–234 (QRELQQQDAE…VYGVGYRWEA (104 aa)) form a DNA-binding region, ompR/PhoB-type.

In terms of processing, phosphorylated by BaeS.

Its subcellular location is the cytoplasm. In terms of biological role, member of the two-component regulatory system BaeS/BaeR. Activates the mdtABCD operon. The sequence is that of Transcriptional regulatory protein BaeR (baeR) from Escherichia coli O6:H1 (strain CFT073 / ATCC 700928 / UPEC).